A 153-amino-acid chain; its full sequence is 3-hydroxyacyl-[acyl-carrier-protein] dehydratase FabZ (153 aa).

H54 is a catalytic residue.

This sequence belongs to the thioester dehydratase family. FabZ subfamily.

It is found in the cytoplasm. The enzyme catalyses a (3R)-hydroxyacyl-[ACP] = a (2E)-enoyl-[ACP] + H2O. Its function is as follows. Involved in unsaturated fatty acids biosynthesis. Catalyzes the dehydration of short chain beta-hydroxyacyl-ACPs and long chain saturated and unsaturated beta-hydroxyacyl-ACPs. The protein is 3-hydroxyacyl-[acyl-carrier-protein] dehydratase FabZ of Shewanella amazonensis (strain ATCC BAA-1098 / SB2B).